The sequence spans 313 residues: MLDKIIRIATRQSPLALWQAHYVQHLLQANHPGLQIELVPMVTRGDIILDTPLAKVGGKGLFVKELELALLDGRADIAVHSMKDVPIAFPEGLGLVTICEREDPRDAFVSSHYTHLDDLPAGSVVGTSSLRRQCQLRERRPDLIIRDLRGNVGTRLAKLDNGDYQAIILAVAGLKRLGLENRIRYAMSAEESLPAVGQGAVGIECRLDDGHTRQLLAPLNHRHTELRVCAERAMNIRLEGGCQVPIGSYAELEGDTLWLRALVGAPDGSQMIRGERRGPAAEAEQMGIELADELLSRGAREILAAVYLDNPAR.

Residue C242 is modified to S-(dipyrrolylmethanemethyl)cysteine.

This sequence belongs to the HMBS family. Monomer. The cofactor is dipyrromethane.

The catalysed reaction is 4 porphobilinogen + H2O = hydroxymethylbilane + 4 NH4(+). It participates in porphyrin-containing compound metabolism; protoporphyrin-IX biosynthesis; coproporphyrinogen-III from 5-aminolevulinate: step 2/4. Functionally, tetrapolymerization of the monopyrrole PBG into the hydroxymethylbilane pre-uroporphyrinogen in several discrete steps. This Yersinia pseudotuberculosis serotype O:3 (strain YPIII) protein is Porphobilinogen deaminase.